The sequence spans 344 residues: sn-glycerol-3-phosphate import ATP-binding protein UgpC 2 (344 aa).

The 231-residue stretch at 4–234 folds into the ABC transporter domain; the sequence is IELIDLKKNY…PETVFVAGFI (231 aa). 36 to 43 contacts ATP; the sequence is GPSGCGKS.

It belongs to the ABC transporter superfamily. sn-glycerol-3-phosphate importer (TC 3.A.1.1.3) family. As to quaternary structure, the complex is composed of two ATP-binding proteins (UgpC), two transmembrane proteins (UgpA and UgpE) and a solute-binding protein (UgpB).

The protein resides in the cell inner membrane. The enzyme catalyses sn-glycerol 3-phosphate(out) + ATP + H2O = sn-glycerol 3-phosphate(in) + ADP + phosphate + H(+). In terms of biological role, part of the ABC transporter complex UgpBAEC involved in sn-glycerol-3-phosphate (G3P) import. Responsible for energy coupling to the transport system. The chain is sn-glycerol-3-phosphate import ATP-binding protein UgpC 2 from Rhizobium johnstonii (strain DSM 114642 / LMG 32736 / 3841) (Rhizobium leguminosarum bv. viciae).